The following is a 228-amino-acid chain: Ribonuclease HII (228 aa).

The 192-residue stretch at 11–202 (GPVAGVDEAG…VVAAAQLHGM (192 aa)) folds into the RNase H type-2 domain. A divalent metal cation contacts are provided by aspartate 17, glutamate 18, and aspartate 111.

The protein belongs to the RNase HII family. Mn(2+) serves as cofactor. The cofactor is Mg(2+).

It is found in the cytoplasm. It catalyses the reaction Endonucleolytic cleavage to 5'-phosphomonoester.. Endonuclease that specifically degrades the RNA of RNA-DNA hybrids. This chain is Ribonuclease HII, found in Saccharopolyspora erythraea (strain ATCC 11635 / DSM 40517 / JCM 4748 / NBRC 13426 / NCIMB 8594 / NRRL 2338).